The primary structure comprises 121 residues: Dihydroneopterin aldolase (121 aa).

Residues E22, Y54, and 73 to 74 (IE) each bind substrate. K100 (proton donor/acceptor) is an active-site residue.

The protein belongs to the DHNA family. As to quaternary structure, homooctamer. Four molecules assemble into a ring, and two rings come together to give a cylinder with a hole of at least 13 a diameter.

The enzyme catalyses 7,8-dihydroneopterin = 6-hydroxymethyl-7,8-dihydropterin + glycolaldehyde. It carries out the reaction 7,8-dihydroneopterin = 7,8-dihydromonapterin. The protein operates within cofactor biosynthesis; tetrahydrofolate biosynthesis; 2-amino-4-hydroxy-6-hydroxymethyl-7,8-dihydropteridine diphosphate from 7,8-dihydroneopterin triphosphate: step 3/4. Catalyzes the conversion of 7,8-dihydroneopterin to 6-hydroxymethyl-7,8-dihydropterin. Can also catalyze the epimerization of carbon 2' of dihydroneopterin to dihydromonapterin. This Staphylococcus epidermidis (strain ATCC 35984 / DSM 28319 / BCRC 17069 / CCUG 31568 / BM 3577 / RP62A) protein is Dihydroneopterin aldolase (folB).